The chain runs to 524 residues: Zinc finger CCCH-type with G patch domain-containing protein (524 aa).

Residues 105–142 (SEESQPLGSNDETSTCSKGSEEEEEEEEEEEDNTSGMK) form a disordered region. Polar residues predominate over residues 106-122 (EESQPLGSNDETSTCSK). Positions 125–137 (EEEEEEEEEEEDN) are enriched in acidic residues. The segment at 184-210 (KAMKPCPFFLDGKCLFNDNCRFSHGQV) adopts a C3H1-type zinc-finger fold. The interval 279-298 (RGSDSSSSSSSDEEEDGAAE) is disordered. A G-patch domain is found at 326–372 (TRGIGSKLLVRMGYEFGKGLGRNAEGRVEPIQAVVLPKGKSLDQCME). Disordered regions lie at residues 375–402 (QRKK…GGAK) and 500–524 (GLQQ…MTEF). Basic residues predominate over residues 376 to 393 (RKKAGGKHKHKTSKRRPK).

The protein localises to the nucleus. Transcription repressor that specifically binds the 5'-GGAG[GA]A[GA]A-3' consensus sequence. Represses transcription by recruiting the chromatin multiprotein complex NuRD to target promoters. Negatively regulates expression of EGFR, a gene involved in cell proliferation, survival and migration. In Xenopus laevis (African clawed frog), this protein is Zinc finger CCCH-type with G patch domain-containing protein (zgpat).